The primary structure comprises 511 residues: Glutamyl-tRNA(Gln) amidotransferase subunit A, mitochondrial (511 aa).

Residues Lys72 and Ser149 each act as charge relay system in the active site. Catalysis depends on Ser173, which acts as the Acyl-ester intermediate.

It belongs to the amidase family. GatA subfamily. As to quaternary structure, subunit of the heterotrimeric GatCAB amidotransferase (AdT) complex, composed of A, B and C subunits.

The protein localises to the mitochondrion. The enzyme catalyses L-glutamyl-tRNA(Gln) + L-glutamine + ATP + H2O = L-glutaminyl-tRNA(Gln) + L-glutamate + ADP + phosphate + H(+). Functionally, allows the formation of correctly charged Gln-tRNA(Gln) through the transamidation of misacylated Glu-tRNA(Gln) in the mitochondria. The reaction takes place in the presence of glutamine and ATP through an activated gamma-phospho-Glu-tRNA(Gln). The polypeptide is Glutamyl-tRNA(Gln) amidotransferase subunit A, mitochondrial (Fusarium vanettenii (strain ATCC MYA-4622 / CBS 123669 / FGSC 9596 / NRRL 45880 / 77-13-4) (Fusarium solani subsp. pisi)).